We begin with the raw amino-acid sequence, 383 residues long: MVWCCRPLLRKYGNFIDNLRIYVKGGAGGMGLPRLGGQGGKGGDVKLVAKKEVTLKKIKDKFPHKRFIGGVGGNSSVRALKGQPGEVCQVEVPSGIVITTEHGVKIGELDKEGDEIRVARGGQGGVFQTDFLPSKGQKRIIHLDLKLISDVGLVGFPNAGKSSLLSRISHAKPQVAEYAFTTVKPELGRIMYPDYKQISVADLPGLIEGAHYNRGMGHKFLKHIERTRQLLFVVDVAGFQLSASTLYRSAFETVLLLTLELQLYKQELLDKPALLAVNKMDLPNANEKFEELLKQLENPAGNFHLLPDELVPERPIEFKHIIPVSAATGQGLENLIGCIRKTMDEQADMEIRELAQERLQSLQKETSRTVKRNLKNSPQRTHH.

Residues 13 to 148 enclose the Obg domain; sequence GNFIDNLRIY…RIIHLDLKLI (136 aa). Residues 149 to 344 form the OBG-type G domain; it reads SDVGLVGFPN…LIGCIRKTMD (196 aa). Residues 155–162, 202–206, and 278–281 each bind GTP; these read GFPNAGKS, DLPGL, and NKMD. The disordered stretch occupies residues 362-383; the sequence is LQKETSRTVKRNLKNSPQRTHH. Residues 369 to 383 show a composition bias toward basic residues; sequence TVKRNLKNSPQRTHH.

It belongs to the TRAFAC class OBG-HflX-like GTPase superfamily. OBG GTPase family.

Its subcellular location is the nucleus. The protein resides in the nucleolus. Functionally, may be involved in the ribosome maturation process. The sequence is that of GTP-binding protein 10 (gtpbp10) from Xenopus tropicalis (Western clawed frog).